The sequence spans 501 residues: MKYILSIDQGTTSSRAIVFDKHANIKGLAQKEFTQIYPQPSWVEHDPTEIWGSQLGVITEALANSRILPNEVDAIGITNQRETTVIWEKSTGKPIYNAIVWQDRRTAKICDQLTKEGKDKIILEKTGLVLDSYFSGTKILWILDNVEGARQKAENGELCFGTIDTWLLWNLTQKKVHATDYSNASRTLLLNIKTLEWDDELLKILNIPKAILPELKESSTIYGETDKSIFGAEIPIAGIAGDQFAATFGQACLKKGMAKNTYGTGCFLTVNIGKEPIINHERLLTSIAWGRKKTVTYVLEGSVFIGGAVIQWLRDGLEFFRKSSDAESLASSASDNGGVYFVPAFVGLGAPHWDSYARGTIIGITRGSTKAHITRAALESIAFQSFDILNTMKKSIPNFEIKELRVDGGASQNNLLMQFQADLLECKVVRPKITETTALGAAYLAGLASGYWQSAEEIISLWQVDKIFEPSMPKNQKEKLLENWNRAIERSKSWIQNSNSL.

Thr-11 contributes to the ADP binding site. The ATP site is built by Thr-11, Thr-12, and Ser-13. Position 11 (Thr-11) interacts with sn-glycerol 3-phosphate. Arg-15 provides a ligand contact to ADP. Sn-glycerol 3-phosphate contacts are provided by Arg-81, Glu-82, Tyr-133, and Asp-242. Positions 81, 82, 133, 242, and 243 each coordinate glycerol. ADP-binding residues include Thr-264 and Gly-307. ATP-binding residues include Thr-264, Gly-307, Gln-311, and Gly-409. ADP contacts are provided by Gly-409 and Asn-413.

This sequence belongs to the FGGY kinase family.

It catalyses the reaction glycerol + ATP = sn-glycerol 3-phosphate + ADP + H(+). It participates in polyol metabolism; glycerol degradation via glycerol kinase pathway; sn-glycerol 3-phosphate from glycerol: step 1/1. Its activity is regulated as follows. Inhibited by fructose 1,6-bisphosphate (FBP). Functionally, key enzyme in the regulation of glycerol uptake and metabolism. Catalyzes the phosphorylation of glycerol to yield sn-glycerol 3-phosphate. This Borrelia garinii subsp. bavariensis (strain ATCC BAA-2496 / DSM 23469 / PBi) (Borreliella bavariensis) protein is Glycerol kinase.